The following is a 357-amino-acid chain: Probable dual-specificity RNA methyltransferase RlmN (357 aa).

The Proton acceptor role is filled by Glu-92. In terms of domain architecture, Radical SAM core spans Gln-98 to Arg-330. An intrachain disulfide couples Cys-105 to Cys-341. [4Fe-4S] cluster contacts are provided by Cys-112, Cys-116, and Cys-119. S-adenosyl-L-methionine contacts are provided by residues Gly-164–Glu-165, Ser-196, Ser-219–His-221, and Asn-297. Catalysis depends on Cys-341, which acts as the S-methylcysteine intermediate.

It belongs to the radical SAM superfamily. RlmN family. [4Fe-4S] cluster serves as cofactor.

Its subcellular location is the cytoplasm. It carries out the reaction adenosine(2503) in 23S rRNA + 2 reduced [2Fe-2S]-[ferredoxin] + 2 S-adenosyl-L-methionine = 2-methyladenosine(2503) in 23S rRNA + 5'-deoxyadenosine + L-methionine + 2 oxidized [2Fe-2S]-[ferredoxin] + S-adenosyl-L-homocysteine. The enzyme catalyses adenosine(37) in tRNA + 2 reduced [2Fe-2S]-[ferredoxin] + 2 S-adenosyl-L-methionine = 2-methyladenosine(37) in tRNA + 5'-deoxyadenosine + L-methionine + 2 oxidized [2Fe-2S]-[ferredoxin] + S-adenosyl-L-homocysteine. In terms of biological role, specifically methylates position 2 of adenine 2503 in 23S rRNA and position 2 of adenine 37 in tRNAs. This is Probable dual-specificity RNA methyltransferase RlmN from Enterococcus faecalis (strain ATCC 700802 / V583).